A 204-amino-acid polypeptide reads, in one-letter code: LexA repressor (204 aa).

Positions 31 to 51 (VREIGQAVGLKSSSTVHTHLV) form a DNA-binding region, H-T-H motif. Active-site for autocatalytic cleavage activity residues include serine 128 and lysine 165.

Belongs to the peptidase S24 family. As to quaternary structure, homodimer.

It catalyses the reaction Hydrolysis of Ala-|-Gly bond in repressor LexA.. Represses a number of genes involved in the response to DNA damage (SOS response), including recA and lexA. In the presence of single-stranded DNA, RecA interacts with LexA causing an autocatalytic cleavage which disrupts the DNA-binding part of LexA, leading to derepression of the SOS regulon and eventually DNA repair. The sequence is that of LexA repressor from Syntrophomonas wolfei subsp. wolfei (strain DSM 2245B / Goettingen).